The sequence spans 96 residues: Prokineticin Bm8-d (96 aa).

The N-terminal stretch at 1–19 (MKCFAQIVVLLLVIAFSHG) is a signal peptide. 5 disulfides stabilise this stretch: C26/C38, C32/C50, C37/C78, C60/C86, and C80/C95.

It belongs to the AVIT (prokineticin) family. Expressed by the skin glands.

The protein resides in the secreted. Functionally, potent agonist for both PKR1/PROKR1 and PKR2/PROKR2, and inducer of a potent and long-lasting hyperalgesia. Also potentiates capsaicin-induced TRPV1 current, when tested on DRG neurons. At subnanomolar concentrations, this protein both induces potent chemotaxis of macrophages and stimulates LPS-induced production of the pro-inflammatory cytokines IL-1 and IL-12. In vivo, potently stimulates the contraction of the guinea-pig gastrointestinal (GI) smooth muscle (nanomolar concentration). This chain is Prokineticin Bm8-d, found in Bombina maxima (Giant fire-bellied toad).